The primary structure comprises 582 residues: mRNA-decapping enzyme 1A (582 aa).

Position 62 is a phosphoserine (Ser62). The segment covering 132 to 141 (RSQQAARDKQ) has biased composition (basic and acidic residues). Disordered stretches follow at residues 132–154 (RSQQ…DHRP) and 172–214 (QMGD…PSGH). A phosphoserine mark is found at Ser142, Ser179, Ser180, Ser315, Ser319, and Ser334. Residues 173 to 196 (MGDSNISSPGLQPSTQLSNLGSTE) show a composition bias toward polar residues. Position 348 is a phosphothreonine (Thr348). Ser353 carries the phosphoserine modification. Arg376 is modified (asymmetric dimethylarginine). Thr401 is subject to Phosphothreonine. Ser422, Ser522, Ser523, and Ser525 each carry phosphoserine. The interval 513–536 (RSSDLERKASSPSPLTIGTPESQR) is disordered. The segment covering 522–533 (SSPSPLTIGTPE) has biased composition (polar residues). Residues Thr528 and Thr531 each carry the phosphothreonine modification.

The protein belongs to the DCP1 family. As to quaternary structure, (Microbial infection) Interacts with rotavirus A non-structural protein 2; this interaction probably plays a role in the sequestration of DCP1A in viral factories. Interacts with rotavirus A non-structural protein 5; this interaction probably plays a role in its sequestration in viral factories. Forms a complex with EDC3, DCP2, DDX6 and EDC4/HEDLS, within this complex directly interacts with EDC3. Part of a cytoplasmic complex containing proteins involved in mRNA decay, including XRN1 and LSM1. Interacts with DCP1B. Interacts with DCP2. Interacts with DDX17 in an RNA-independent manner. Interacts with PNRC2. Interacts with SMAD4. Interacts with UPF1. Interacts with ZC3HAV1. Interacts with ZFP36L1. Interacts with NBDY. Interacts with DHX34; the interaction is RNA-independent. Detected in heart, brain, placenta, lung, skeletal muscle, liver, kidney and pancreas.

Its subcellular location is the cytoplasm. The protein resides in the P-body. It is found in the nucleus. It catalyses the reaction a 5'-end (N(7)-methyl 5'-triphosphoguanosine)-ribonucleoside in mRNA + H2O = N(7)-methyl-GDP + a 5'-end phospho-ribonucleoside in mRNA + 2 H(+). Its function is as follows. Necessary for the degradation of mRNAs, both in normal mRNA turnover and in nonsense-mediated mRNA decay. Removes the 7-methyl guanine cap structure from mRNA molecules, yielding a 5'-phosphorylated mRNA fragment and 7m-GDP. Contributes to the transactivation of target genes after stimulation by TGFB1. Essential for embryonic development. The polypeptide is mRNA-decapping enzyme 1A (DCP1A) (Homo sapiens (Human)).